The following is a 464-amino-acid chain: Propanal dehydrogenase (CoA-propanoylating) (464 aa).

The interval 1–18 is targets protein to the BMC; that stretch reads MNTSELETLIRTILSEQL.

Belongs to the EutE/PduP family. Interacts with BMC shell proteins PduA and PduJ, which target this protein to BMC. Interacts with PduQ, probably via the N-terminus of PduQ. Interacts with PduK, probably with its BMC-containing N-terminus.

Its subcellular location is the bacterial microcompartment. It carries out the reaction propanal + NAD(+) + CoA = propanoyl-CoA + NADH + H(+). The protein operates within polyol metabolism; 1,2-propanediol degradation. A CoA-acylating aldehyde dehydrogenase required for optimal 1,2-propanediol (1,2-PD) degradation. Optimizes growth in the bacterial microcompartment (BMC) dedicated to 1,2-PD degradation by minimizing propionaldehyde toxicity. Directly targeted to the BMC. NAD(+) and NADH are regenerated internally within the Pdu BMC by the PduP and PduQ enzymes, which reduce NAD(+) and oxidize NADH respectively, although there must also be cofactor transport across the BMC. Its function is as follows. The 1,2-PD-specific bacterial microcompartment (BMC) concentrates low levels of 1,2-PD catabolic enzymes, concentrates volatile reaction intermediates thus enhancing pathway flux and keeps the level of toxic, mutagenic propionaldehyde low. The sequence is that of Propanal dehydrogenase (CoA-propanoylating) from Salmonella typhimurium (strain LT2 / SGSC1412 / ATCC 700720).